The following is a 535-amino-acid chain: Large neutral amino acids transporter small subunit 2 (535 aa).

Positions 1–17 (MEEGARHRNNTEKKHPG) are enriched in basic and acidic residues. The segment at 1–30 (MEEGARHRNNTEKKHPGGGESDASPEAGSG) is disordered. Over 1-44 (MEEGARHRNNTEKKHPGGGESDASPEAGSGGGGVALKKEIGLVS) the chain is Cytoplasmic. Serine 29 carries the phosphoserine modification. The chain crosses the membrane as a helical span at residues 45 to 65 (ACGIIVGNIIGSGIFVSPKGV). L-leucine is bound at residue isoleucine 53. Residues 66–73 (LENAGSVG) are Extracellular-facing. The helical transmembrane segment at 74-95 (LALIVWIVTGFITVVGALCYAE) threads the bilayer. The Cytoplasmic portion of the chain corresponds to 96 to 116 (LGVTIPKSGGDYSYVKDIFGG). A helical membrane pass occupies residues 117–149 (LAGFLRLWIAVLVIYPTNQAVIALTFSNYVLQP). Asparagine 134 is an L-tryptophan binding site. At 150 to 157 (LFPTCFPP) the chain is on the extracellular side. Residues 158–178 (ESGLRLLAAICLLLLTWVNCS) traverse the membrane as a helical segment. Over 179 to 181 (SVR) the chain is Cytoplasmic. A helical membrane pass occupies residues 182 to 210 (WATRVQDIFTAGKLLALALIIIMGIVQIC). The Extracellular portion of the chain corresponds to 211–230 (KGEYFWLEPKNAFENFQEPD). The helical transmembrane segment at 231 to 252 (IGLVALAFLQGSFAYGGWNFLN) threads the bilayer. An L-leucine-binding site is contributed by glycine 246. Residues 253–265 (YVTEELVDPYKNL) are Cytoplasmic-facing. A helical transmembrane segment spans residues 266-287 (PRAIFISIPLVTFVYVFANVAY). At 288 to 312 (VTAMSPQELLASNAVAVTFGEKLLG) the chain is on the extracellular side. Residues 313–338 (VMAWIMPISVALSTFGGVNGSLFTSS) form a helical membrane-spanning segment. Residues 339–364 (RLFFAGAREGHLPSVLAMIHVKRCTP) lie on the Cytoplasmic side of the membrane. The chain crosses the membrane as a helical span at residues 365–382 (IPALLFTCISTLLMLVTS). At 383-386 (DMYT) the chain is on the extracellular side. The chain crosses the membrane as a helical span at residues 387–408 (LINYVGFINYLFYGVTVAGQIV). Residue asparagine 395 participates in L-tryptophan binding. Residues 409 to 423 (LRWKKPDIPRPIKIN) lie on the Cytoplasmic side of the membrane. Helical transmembrane passes span 424–446 (LLFPIIYLLFWAFLLVFSLWSEP) and 447–466 (VVCGIGLAIMLTGVPVYFLG). Residues 467–535 (VYWQHKPKCF…DKDVAGQPQP (69 aa)) lie on the Cytoplasmic side of the membrane. Residues 502-535 (SGTEEANEDMEEQQQPMYQPTPTKDKDVAGQPQP) are disordered. The segment covering 514 to 523 (QQQPMYQPTP) has biased composition (polar residues).

It belongs to the amino acid-polyamine-organocation (APC) superfamily. L-type amino acid transporter (LAT) (TC 2.A.3.8) family. As to quaternary structure, disulfide-linked heterodimer composed of the catalytic light chain subunit SLC7A8 and the heavy chain subunit SLC3A2. SLC3A2 acts as chaperones for correct plasma membrane trafficking and stabilization of SLC7A8 and modulates the substrate affinity and specificity of SLC7A8. ICAM-1 associates with the heterodimer SLC3A2/SLC7A8; this interaction regulates SLC7A8 activity. As to expression, strongest expression is observed in kidney and moderate expression in placenta and brain, followed by liver, prostate, testis, ovary, lymph node, thymus, spleen, skeletal muscle and heart. Also expressed in fetal liver as well as in the retinal pigment epithelial cell line ARPE-19 and the intestinal epithelial cell line Caco-2.

The protein localises to the cell membrane. Its subcellular location is the basolateral cell membrane. The enzyme catalyses L-histidine(in) + L-phenylalanine(out) = L-histidine(out) + L-phenylalanine(in). The catalysed reaction is L-tryptophan(in) + L-phenylalanine(out) = L-tryptophan(out) + L-phenylalanine(in). It catalyses the reaction L-isoleucine(in) + L-phenylalanine(out) = L-isoleucine(out) + L-phenylalanine(in). It carries out the reaction L-valine(in) + L-phenylalanine(out) = L-valine(out) + L-phenylalanine(in). The enzyme catalyses L-leucine(in) + L-phenylalanine(out) = L-leucine(out) + L-phenylalanine(in). The catalysed reaction is L-glutamine(in) + L-phenylalanine(out) = L-glutamine(out) + L-phenylalanine(in). It catalyses the reaction L-cysteine(in) + L-phenylalanine(out) = L-cysteine(out) + L-phenylalanine(in). It carries out the reaction L-phenylalanine(out) + L-methionine(in) = L-phenylalanine(in) + L-methionine(out). The enzyme catalyses L-leucine(out) + L-methionine(in) = L-leucine(in) + L-methionine(out). The catalysed reaction is L-cysteine(out) + L-methionine(in) = L-cysteine(in) + L-methionine(out). It catalyses the reaction S-methylmercury-L-cysteine(out) + L-methionine(in) = S-methylmercury-L-cysteine(in) + L-methionine(out). It carries out the reaction S-methylmercury-L-cysteine(in) + L-leucine(out) = S-methylmercury-L-cysteine(out) + L-leucine(in). The enzyme catalyses S-methylmercury-L-cysteine(in) + L-phenylalanine(out) = S-methylmercury-L-cysteine(out) + L-phenylalanine(in). The catalysed reaction is L-phenylalanine(out) + L-serine(in) = L-phenylalanine(in) + L-serine(out). It catalyses the reaction L-phenylalanine(out) + glycine(in) = L-phenylalanine(in) + glycine(out). It carries out the reaction L-phenylalanine(out) + L-alanine(in) = L-phenylalanine(in) + L-alanine(out). The enzyme catalyses 3,3'-diiodo-L-thyronine(out) = 3,3'-diiodo-L-thyronine(in). The catalysed reaction is 3,3',5-triiodo-L-thyronine(out) = 3,3',5-triiodo-L-thyronine(in). It catalyses the reaction L-dopa(out) + L-phenylalanine(in) = L-dopa(in) + L-phenylalanine(out). Inhibited by the L-type inhibitor 2-Aminobicyclo-(2,2,1)-heptane-2-carboxylic acid (BCH). In terms of biological role, associates with SLC3A2 to form a functional heterodimeric complex that translocates small and large neutral amino acids with broad specificity and a stoichiometry of 1:1. Functions as amino acid antiporter mediating the influx of extracellular essential amino acids mainly in exchange with the efflux of highly concentrated intracellular amino acids. Has relatively symmetrical selectivities but strongly asymmetrical substrate affinities at both the intracellular and extracellular sides of the transporter. This asymmetry allows SLC7A8 to regulate intracellular amino acid pools (mM concentrations) by exchange with external amino acids (uM concentration range), equilibrating the relative concentrations of different amino acids across the plasma membrane instead of mediating their net uptake. May play an essential role in the reabsorption of neutral amino acids from the epithelial cells to the bloodstream in the kidney. Involved in the uptake of methylmercury (MeHg) when administered as the L-cysteine or D,L-homocysteine complexes, and hence plays a role in metal ion homeostasis and toxicity. Involved in the cellular activity of small molecular weight nitrosothiols, via the stereoselective transport of L-nitrosocysteine (L-CNSO) across the transmembrane. Imports the thyroid hormone diiodothyronine (T2) and to a smaller extent triiodothyronine (T3) but not rT 3 or thyroxine (T4). Mediates the uptake of L-DOPA. May participate in auditory function. In Homo sapiens (Human), this protein is Large neutral amino acids transporter small subunit 2.